Here is a 287-residue protein sequence, read N- to C-terminus: Pyridoxal kinase PdxY (287 aa).

Substrate-binding positions include Ser10 and 45–46; that span reads TQ. ATP-binding positions include Asp112, Ala144, Glu149, Lys182, and 209-212; that span reads RPLV. Asp224 provides a ligand contact to substrate.

This sequence belongs to the pyridoxine kinase family. PdxY subfamily. Homodimer. The cofactor is Mg(2+).

The catalysed reaction is pyridoxal + ATP = pyridoxal 5'-phosphate + ADP + H(+). It functions in the pathway cofactor metabolism; pyridoxal 5'-phosphate salvage; pyridoxal 5'-phosphate from pyridoxal: step 1/1. In terms of biological role, pyridoxal kinase involved in the salvage pathway of pyridoxal 5'-phosphate (PLP). Catalyzes the phosphorylation of pyridoxal to PLP. The protein is Pyridoxal kinase PdxY of Escherichia coli (strain UTI89 / UPEC).